The following is an 84-amino-acid chain: Putative regulatory protein Hore_09800 (84 aa).

This sequence belongs to the RemA family.

The protein is Putative regulatory protein Hore_09800 of Halothermothrix orenii (strain H 168 / OCM 544 / DSM 9562).